We begin with the raw amino-acid sequence, 486 residues long: Transmembrane protein 39A (486 aa).

N31 carries N-linked (GlcNAc...) asparagine glycosylation. A run of 8 helical transmembrane segments spans residues 72 to 92 (SLFF…IQYI), 110 to 130 (TSLN…VMLA), 155 to 175 (LILA…WTLV), 182 to 202 (SVLN…LYCF), 285 to 305 (EVLF…LCFV), 317 to 337 (CEHL…QLLP), 418 to 438 (VLNL…YSLL), and 444 to 464 (NHTL…FKLL).

The protein belongs to the TMEM39 family. Interacts with SACM1L, SEC23A and SEC24A.

The protein resides in the endoplasmic reticulum membrane. Its function is as follows. Regulates autophagy by controlling the spatial distribution and levels of the intracellular phosphatidylinositol 4-phosphate (PtdIns(4)P) pools. Modulates (PtdIns(4)P) levels by regulating the ER-to-Golgi trafficking of the phosphatidylinositide phosphatase SACM1L. The polypeptide is Transmembrane protein 39A (Tmem39a) (Mus musculus (Mouse)).